A 156-amino-acid polypeptide reads, in one-letter code: ATP synthase subunit b (156 aa).

Residues 11–31 (LIAFALFVWFCMKFVWPPIIN) traverse the membrane as a helical segment.

This sequence belongs to the ATPase B chain family. F-type ATPases have 2 components, F(1) - the catalytic core - and F(0) - the membrane proton channel. F(1) has five subunits: alpha(3), beta(3), gamma(1), delta(1), epsilon(1). F(0) has three main subunits: a(1), b(2) and c(10-14). The alpha and beta chains form an alternating ring which encloses part of the gamma chain. F(1) is attached to F(0) by a central stalk formed by the gamma and epsilon chains, while a peripheral stalk is formed by the delta and b chains.

It localises to the cell inner membrane. In terms of biological role, f(1)F(0) ATP synthase produces ATP from ADP in the presence of a proton or sodium gradient. F-type ATPases consist of two structural domains, F(1) containing the extramembraneous catalytic core and F(0) containing the membrane proton channel, linked together by a central stalk and a peripheral stalk. During catalysis, ATP synthesis in the catalytic domain of F(1) is coupled via a rotary mechanism of the central stalk subunits to proton translocation. Its function is as follows. Component of the F(0) channel, it forms part of the peripheral stalk, linking F(1) to F(0). This Haemophilus influenzae (strain PittGG) protein is ATP synthase subunit b.